Reading from the N-terminus, the 523-residue chain is Na(+)/H(+) antiporter NhaB (523 aa).

Helical transmembrane passes span 28-48, 51-71, 89-109, 137-157, 237-257, 302-322, 347-367, 390-410, 445-465, and 476-496; these read FLII…WLLV, FIFT…GLLA, LSAN…IYFV, MAAF…VISI, FFIR…ATCV, AIIC…VGLI, TESL…AVII, LFYI…VGTV, VATP…LAPL, and MALP…MYLL.

This sequence belongs to the NhaB Na(+)/H(+) (TC 2.A.34) antiporter family.

It localises to the cell inner membrane. It carries out the reaction 2 Na(+)(in) + 3 H(+)(out) = 2 Na(+)(out) + 3 H(+)(in). Functionally, na(+)/H(+) antiporter that extrudes sodium in exchange for external protons. This Tolumonas auensis (strain DSM 9187 / NBRC 110442 / TA 4) protein is Na(+)/H(+) antiporter NhaB.